We begin with the raw amino-acid sequence, 348 residues long: Probable dual-specificity RNA methyltransferase RlmN (348 aa).

The active-site Proton acceptor is the Glu-93. Residues 99 to 333 form the Radical SAM core domain; it reads TEKRLTACLS…VSLRKSRGLD (235 aa). An intrachain disulfide couples Cys-106 to Cys-338. [4Fe-4S] cluster contacts are provided by Cys-113, Cys-117, and Cys-120. Residues 160–161, Ser-190, 219–221, and Asn-295 each bind S-adenosyl-L-methionine; these read GE and SLH. Cys-338 (S-methylcysteine intermediate) is an active-site residue.

This sequence belongs to the radical SAM superfamily. RlmN family. It depends on [4Fe-4S] cluster as a cofactor.

The protein localises to the cytoplasm. It carries out the reaction adenosine(2503) in 23S rRNA + 2 reduced [2Fe-2S]-[ferredoxin] + 2 S-adenosyl-L-methionine = 2-methyladenosine(2503) in 23S rRNA + 5'-deoxyadenosine + L-methionine + 2 oxidized [2Fe-2S]-[ferredoxin] + S-adenosyl-L-homocysteine. The enzyme catalyses adenosine(37) in tRNA + 2 reduced [2Fe-2S]-[ferredoxin] + 2 S-adenosyl-L-methionine = 2-methyladenosine(37) in tRNA + 5'-deoxyadenosine + L-methionine + 2 oxidized [2Fe-2S]-[ferredoxin] + S-adenosyl-L-homocysteine. Functionally, specifically methylates position 2 of adenine 2503 in 23S rRNA and position 2 of adenine 37 in tRNAs. This Prochlorococcus marinus (strain MIT 9215) protein is Probable dual-specificity RNA methyltransferase RlmN.